The chain runs to 231 residues: Orotate phosphoribosyltransferase (231 aa).

Residues lysine 27, 79–80 (YK), arginine 106, lysine 107, lysine 110, histidine 112, and 133–141 (DDVMTAGTA) each bind 5-phospho-alpha-D-ribose 1-diphosphate. Orotate contacts are provided by threonine 137 and arginine 166.

The protein belongs to the purine/pyrimidine phosphoribosyltransferase family. PyrE subfamily. Homodimer. Mg(2+) is required as a cofactor.

The enzyme catalyses orotidine 5'-phosphate + diphosphate = orotate + 5-phospho-alpha-D-ribose 1-diphosphate. The protein operates within pyrimidine metabolism; UMP biosynthesis via de novo pathway; UMP from orotate: step 1/2. Its function is as follows. Catalyzes the transfer of a ribosyl phosphate group from 5-phosphoribose 1-diphosphate to orotate, leading to the formation of orotidine monophosphate (OMP). This chain is Orotate phosphoribosyltransferase, found in Bifidobacterium adolescentis (strain ATCC 15703 / DSM 20083 / NCTC 11814 / E194a).